The following is a 150-amino-acid chain: Lipoprotein signal peptidase (150 aa).

A run of 3 helical transmembrane segments spans residues 8-28 (FYALVGFLVFLDQVTKYLAHA), 58-78 (GFSWLFFLLGIIALIFIGWFL), and 81-101 (TTGSIVFLALLQGGIAGNVFD). Residues aspartate 116 and aspartate 132 contribute to the active site. A helical membrane pass occupies residues 126–146 (VVFNIADLFILAGVFGTFLFL).

The protein belongs to the peptidase A8 family.

It localises to the cell membrane. It catalyses the reaction Release of signal peptides from bacterial membrane prolipoproteins. Hydrolyzes -Xaa-Yaa-Zaa-|-(S,diacylglyceryl)Cys-, in which Xaa is hydrophobic (preferably Leu), and Yaa (Ala or Ser) and Zaa (Gly or Ala) have small, neutral side chains.. It functions in the pathway protein modification; lipoprotein biosynthesis (signal peptide cleavage). Functionally, this protein specifically catalyzes the removal of signal peptides from prolipoproteins. The protein is Lipoprotein signal peptidase of Tropheryma whipplei (strain Twist) (Whipple's bacillus).